An 88-amino-acid chain; its full sequence is Phosphocarrier protein HPr (88 aa).

Residues 1–88 (MEQASFVVID…EVLKKEGLAE (88 aa)) enclose the HPr domain. His15 functions as the Pros-phosphohistidine intermediate in the catalytic mechanism. Residue Ser46 is modified to Phosphoserine; by HPrK/P.

This sequence belongs to the HPr family.

It localises to the cytoplasm. Phosphorylation on Ser-46 inhibits the phosphoryl transfer from enzyme I to HPr. Functionally, general (non sugar-specific) component of the phosphoenolpyruvate-dependent sugar phosphotransferase system (sugar PTS). This major carbohydrate active-transport system catalyzes the phosphorylation of incoming sugar substrates concomitantly with their translocation across the cell membrane. The phosphoryl group from phosphoenolpyruvate (PEP) is transferred to the phosphoryl carrier protein HPr by enzyme I. Phospho-HPr then transfers it to the PTS EIIA domain. In terms of biological role, P-Ser-HPr interacts with the catabolite control protein A (CcpA), forming a complex that binds to DNA at the catabolite response elements cre, operator sites preceding a large number of catabolite-regulated genes. Thus, P-Ser-HPr is a corepressor in carbon catabolite repression (CCR), a mechanism that allows bacteria to coordinate and optimize the utilization of available carbon sources. P-Ser-HPr also plays a role in inducer exclusion, in which it probably interacts with several non-PTS permeases and inhibits their transport activity. In Listeria monocytogenes serovar 1/2a (strain ATCC BAA-679 / EGD-e), this protein is Phosphocarrier protein HPr (ptsH).